Reading from the N-terminus, the 188-residue chain is Methylated-DNA--protein-cysteine methyltransferase (188 aa).

DNA is bound by residues Tyr-120, Gly-121, and Arg-134. Cys-151 functions as the Nucleophile; methyl group acceptor in the catalytic mechanism. Ser-157 is a binding site for DNA.

The protein belongs to the MGMT family.

Its subcellular location is the nucleus. It carries out the reaction a 6-O-methyl-2'-deoxyguanosine in DNA + L-cysteinyl-[protein] = S-methyl-L-cysteinyl-[protein] + a 2'-deoxyguanosine in DNA. It catalyses the reaction a 4-O-methyl-thymidine in DNA + L-cysteinyl-[protein] = a thymidine in DNA + S-methyl-L-cysteinyl-[protein]. Involved in the cellular defense against the biological effects of O6-methylguanine (O6-MeG) and O4-methylthymine (O4-MeT) in DNA. Repairs the methylated nucleobase in DNA by stoichiometrically transferring the methyl group to a cysteine residue in the enzyme. This is a suicide reaction: the enzyme is irreversibly inactivated. Prefers double-stranded DNA over single-stranded DNA as substrate. The protein is Methylated-DNA--protein-cysteine methyltransferase (MGT1) of Saccharomyces cerevisiae (strain YJM789) (Baker's yeast).